The sequence spans 556 residues: Peptide chain release factor 3 (556 aa).

Residues 28-297 enclose the tr-type G domain; sequence QQRRNFAIIS…AFLDYALKPG (270 aa). GTP contacts are provided by residues 37–44, 105–109, and 159–162; these read SHPDAGKT, DTPGH, and NKMD.

It belongs to the TRAFAC class translation factor GTPase superfamily. Classic translation factor GTPase family. PrfC subfamily.

It localises to the cytoplasm. Increases the formation of ribosomal termination complexes and stimulates activities of RF-1 and RF-2. It binds guanine nucleotides and has strong preference for UGA stop codons. It may interact directly with the ribosome. The stimulation of RF-1 and RF-2 is significantly reduced by GTP and GDP, but not by GMP. The polypeptide is Peptide chain release factor 3 (Synechococcus elongatus (strain ATCC 33912 / PCC 7942 / FACHB-805) (Anacystis nidulans R2)).